The following is a 444-amino-acid chain: N-succinylarginine dihydrolase (444 aa).

Residues 19–28, asparagine 110, and 137–138 each bind substrate; these read SGLSFGNVAS and HR. Residue glutamate 174 is part of the active site. Arginine 214 contacts substrate. The active site involves histidine 250. Substrate contacts are provided by aspartate 252 and asparagine 362. Catalysis depends on cysteine 368, which acts as the Nucleophile.

The protein belongs to the succinylarginine dihydrolase family. Homodimer.

It catalyses the reaction N(2)-succinyl-L-arginine + 2 H2O + 2 H(+) = N(2)-succinyl-L-ornithine + 2 NH4(+) + CO2. It participates in amino-acid degradation; L-arginine degradation via AST pathway; L-glutamate and succinate from L-arginine: step 2/5. Its function is as follows. Catalyzes the hydrolysis of N(2)-succinylarginine into N(2)-succinylornithine, ammonia and CO(2). The sequence is that of N-succinylarginine dihydrolase from Photobacterium profundum (strain SS9).